We begin with the raw amino-acid sequence, 62 residues long: Protein DsrB (62 aa).

Belongs to the DsrB family.

This Citrobacter koseri (strain ATCC BAA-895 / CDC 4225-83 / SGSC4696) protein is Protein DsrB.